Here is a 340-residue protein sequence, read N- to C-terminus: Glyceraldehyde-3-phosphate dehydrogenase (340 aa).

NAD(+) contacts are provided by residues 12-13 (RI), Asp-40, Lys-85, and Ser-128. Residues 158-160 (SCT), Thr-189, Arg-204, 217-218 (TG), and Arg-240 contribute to the D-glyceraldehyde 3-phosphate site. Cys-159 functions as the Nucleophile in the catalytic mechanism. Lys-257 is covalently cross-linked (Isoglutamyl lysine isopeptide (Lys-Gln) (interchain with Q-Cter in protein Pup)). Asn-321 provides a ligand contact to NAD(+).

It belongs to the glyceraldehyde-3-phosphate dehydrogenase family. As to quaternary structure, homotetramer.

It localises to the cytoplasm. The catalysed reaction is D-glyceraldehyde 3-phosphate + phosphate + NAD(+) = (2R)-3-phospho-glyceroyl phosphate + NADH + H(+). It participates in carbohydrate degradation; glycolysis; pyruvate from D-glyceraldehyde 3-phosphate: step 1/5. Its function is as follows. Catalyzes the oxidative phosphorylation of glyceraldehyde 3-phosphate (G3P) to 1,3-bisphosphoglycerate (BPG) using the cofactor NAD. The first reaction step involves the formation of a hemiacetal intermediate between G3P and a cysteine residue, and this hemiacetal intermediate is then oxidized to a thioester, with concomitant reduction of NAD to NADH. The reduced NADH is then exchanged with the second NAD, and the thioester is attacked by a nucleophilic inorganic phosphate to produce BPG. This is Glyceraldehyde-3-phosphate dehydrogenase (gapA) from Mycolicibacterium smegmatis (strain ATCC 700084 / mc(2)155) (Mycobacterium smegmatis).